Reading from the N-terminus, the 168-residue chain is Probable chorismate pyruvate-lyase (168 aa).

Substrate contacts are provided by R75, I114, and E155.

The protein belongs to the UbiC family.

The protein resides in the cytoplasm. The enzyme catalyses chorismate = 4-hydroxybenzoate + pyruvate. The protein operates within cofactor biosynthesis; ubiquinone biosynthesis. In terms of biological role, removes the pyruvyl group from chorismate, with concomitant aromatization of the ring, to provide 4-hydroxybenzoate (4HB) for the ubiquinone pathway. In Psychrobacter cryohalolentis (strain ATCC BAA-1226 / DSM 17306 / VKM B-2378 / K5), this protein is Probable chorismate pyruvate-lyase.